The chain runs to 89 residues: Small ribosomal subunit protein bS20 (89 aa).

The segment at 1–28 (MTLANIKSAKKRAVQSEKRRQHNASQRS) is disordered.

The protein belongs to the bacterial ribosomal protein bS20 family.

Binds directly to 16S ribosomal RNA. The chain is Small ribosomal subunit protein bS20 from Haemophilus ducreyi (strain 35000HP / ATCC 700724).